The sequence spans 62 residues: MYCLPVFIILLLLISSAPSTPPQPRNKDRVHLISLLDNHKQILQRDWNSCCGKNPGCCPWGK.

The first 19 residues, 1-19, serve as a signal peptide directing secretion; that stretch reads MYCLPVFIILLLLISSAPS. Residues 20–48 constitute a propeptide that is removed on maturation; it reads TPPQPRNKDRVHLISLLDNHKQILQRDWN. Trp60 is modified (tryptophan amide).

The protein belongs to the conotoxin T superfamily. In terms of processing, contains 2 disulfide bonds that can be either 'C1-C3, C2-C4' or 'C1-C4, C2-C3', since these disulfide connectivities have been observed for conotoxins with cysteine framework V (for examples, see AC P0DQQ7 and AC P81755). As to expression, expressed by the venom duct.

It is found in the secreted. The sequence is that of Conotoxin Im5.1 from Conus imperialis (Imperial cone).